Consider the following 113-residue polypeptide: Hydrogenase maturation factor HypA (113 aa).

Histidine 2 provides a ligand contact to Ni(2+). Cysteine 73, cysteine 76, cysteine 89, and cysteine 92 together coordinate Zn(2+).

It belongs to the HypA/HybF family.

Involved in the maturation of [NiFe] hydrogenases. Required for nickel insertion into the metal center of the hydrogenase. The sequence is that of Hydrogenase maturation factor HypA from Dechloromonas aromatica (strain RCB).